The primary structure comprises 532 residues: IQ domain-containing protein IQM4 (532 aa).

Disordered stretches follow at residues 47-67 (SRTNSFKSENPQEKSPKTGME) and 85-104 (PMNKEDEEIVEPTKPARNSL). A compositionally biased stretch (basic and acidic residues) spans 56 to 66 (NPQEKSPKTGM). Over residues 85–94 (PMNKEDEEIV) the composition is skewed to acidic residues. An IQ domain is found at 136–165 (LDAAATTLQKVYKSYRTRRNLADCAVVVEE). Disordered stretches follow at residues 410 to 443 (SSGYEEEATKEEEAEKKPAETIVTEEQEEEKERE) and 487 to 513 (PRISPGSTRFPSPYGPIPSPRPSPRVR). The segment covering 487–496 (PRISPGSTRF) has biased composition (polar residues). The segment covering 499–509 (PYGPIPSPRPS) has biased composition (pro residues).

As to expression, expressed in roots, cauline leaves and flowers, and at lower levels in rosette leaves, stems and siliques.

The protein resides in the cytoplasm. It is found in the nucleus. May be involved in biotic and abiotic stress responses. The sequence is that of IQ domain-containing protein IQM4 from Arabidopsis thaliana (Mouse-ear cress).